The following is a 193-amino-acid chain: MRLCDRDIEAWLDEGRLAITPRPPVERINGATVDVRLGNKFRTFRGHTAAYIDLSGPKDEVSAALDRVMSDEIVLNDGEAFFLHPGELALAVTYESVTLPADLVGWLDGRSSLARLGLMVHVTAHRIDPGWQGCIVLEFYNSGKLPLALRPGMLIGALSFEPLSGPAARPYNRRQDAKYRDQQGAVASRIDKD.

DCTP contacts are provided by residues 110–115 (RSSLAR), aspartate 128, 136–138 (VLE), tyrosine 171, lysine 178, and glutamine 182. Residue glutamate 138 is the Proton donor/acceptor of the active site. The tract at residues 169–193 (RPYNRRQDAKYRDQQGAVASRIDKD) is disordered.

This sequence belongs to the dCTP deaminase family. Homotrimer.

It carries out the reaction dCTP + H2O + H(+) = dUTP + NH4(+). The protein operates within pyrimidine metabolism; dUMP biosynthesis; dUMP from dCTP (dUTP route): step 1/2. Catalyzes the deamination of dCTP to dUTP. The protein is dCTP deaminase of Cronobacter sakazakii (strain ATCC BAA-894) (Enterobacter sakazakii).